Reading from the N-terminus, the 293-residue chain is Putative serine protease 42 (293 aa).

Residues 1–26 form the signal peptide; sequence MSSGGGSRGLLAWLLLLQPWPGQNWA. The disordered stretch occupies residues 33–60; the sequence is LPSPLLSEEGGENPEASPAPGPEAGPPL. The Peptidase S1 domain occupies 80-293; it reads IVGGVDAEEG…IVSWGIGCGR (214 aa). A disulfide bridge connects residues cysteine 105 and cysteine 121. Histidine 120 (charge relay system) is an active-site residue. N-linked (GlcNAc...) asparagine glycosylation occurs at asparagine 141. Aspartate 166 serves as the catalytic Charge relay system. N-linked (GlcNAc...) asparagine glycosylation is present at asparagine 177. Cystine bridges form between cysteine 200–cysteine 273, cysteine 232–cysteine 253, and cysteine 263–cysteine 291. Serine 267 serves as the catalytic Charge relay system. Asparagine 276 carries an N-linked (GlcNAc...) asparagine glycan.

It belongs to the peptidase S1 family.

The protein localises to the cytoplasm. Its subcellular location is the cell membrane. Functionally, plays a role in spermatogenesis. Involved in germ cell survival during meiosis. The chain is Putative serine protease 42 from Homo sapiens (Human).